Reading from the N-terminus, the 20-residue chain is Protein PR-L5 (20 aa).

This sequence belongs to the BetVI family.

In Lupinus luteus (European yellow lupine), this protein is Protein PR-L5.